The chain runs to 78 residues: Large ribosomal subunit protein bL28 (78 aa).

The protein belongs to the bacterial ribosomal protein bL28 family.

The chain is Large ribosomal subunit protein bL28 from Synechococcus sp. (strain CC9605).